A 131-amino-acid chain; its full sequence is MRHRHGLRKLNRTSSHRLAMLRNMTVSLLRHEAIKTTLPKAKELRRVIEPILTLGKTDSLANKRLAFNRLRDREMVVKLFAELGPRYANRNGGYLRILKMGFRAGDNAPMAFIELLDRPETTEAVEDNSGE.

Belongs to the bacterial ribosomal protein bL17 family. In terms of assembly, part of the 50S ribosomal subunit. Contacts protein L32.

This chain is Large ribosomal subunit protein bL17, found in Herminiimonas arsenicoxydans.